The chain runs to 364 residues: Dual-specificity RNA methyltransferase RlmN (364 aa).

The Proton acceptor role is filled by E91. One can recognise a Radical SAM core domain in the interval 102 to 337; it reads GTLRITQCLS…AIIRKSKGQD (236 aa). C109 and C342 are joined by a disulfide. Positions 116, 120, and 123 each coordinate [4Fe-4S] cluster. S-adenosyl-L-methionine is bound by residues 169–170, S201, 223–225, and N299; these read GE and SLH. The active-site S-methylcysteine intermediate is C342.

It belongs to the radical SAM superfamily. RlmN family. [4Fe-4S] cluster is required as a cofactor.

The protein resides in the cytoplasm. The catalysed reaction is adenosine(2503) in 23S rRNA + 2 reduced [2Fe-2S]-[ferredoxin] + 2 S-adenosyl-L-methionine = 2-methyladenosine(2503) in 23S rRNA + 5'-deoxyadenosine + L-methionine + 2 oxidized [2Fe-2S]-[ferredoxin] + S-adenosyl-L-homocysteine. It carries out the reaction adenosine(37) in tRNA + 2 reduced [2Fe-2S]-[ferredoxin] + 2 S-adenosyl-L-methionine = 2-methyladenosine(37) in tRNA + 5'-deoxyadenosine + L-methionine + 2 oxidized [2Fe-2S]-[ferredoxin] + S-adenosyl-L-homocysteine. Its function is as follows. Specifically methylates position 2 of adenine 2503 in 23S rRNA and position 2 of adenine 37 in tRNAs. m2A2503 modification seems to play a crucial role in the proofreading step occurring at the peptidyl transferase center and thus would serve to optimize ribosomal fidelity. The sequence is that of Dual-specificity RNA methyltransferase RlmN from Nitratidesulfovibrio vulgaris (strain ATCC 29579 / DSM 644 / CCUG 34227 / NCIMB 8303 / VKM B-1760 / Hildenborough) (Desulfovibrio vulgaris).